Consider the following 671-residue polypeptide: Probable potassium transport system protein Kup (671 aa).

The interval 1 to 43 (MSQIPSPNDPASTGAAPSSAAVPAGPSATPAPSPTAGFSLPGH) is disordered. Residues 10–37 (PASTGAAPSSAAVPAGPSATPAPSPTAG) show a composition bias toward low complexity. Helical transmembrane passes span 52–72 (LAAL…TSPL), 92–112 (VLGV…FKYM), 147–167 (LMLG…TPAI), 181–201 (PAME…LFLF), 209–229 (VGAV…VLGV), 255–275 (GWHG…GEAL), 291–311 (WLGL…ALLL), 323–343 (LLAP…AAIV), 381–401 (IYLP…VLGF), 407–427 (LASA…LLFH), 441–461 (AWPL…ANVV), and 465–485 (DGGW…STWK).

This sequence belongs to the HAK/KUP transporter (TC 2.A.72) family.

The protein localises to the cell inner membrane. It carries out the reaction K(+)(in) + H(+)(in) = K(+)(out) + H(+)(out). Its function is as follows. Transport of potassium into the cell. Likely operates as a K(+):H(+) symporter. The chain is Probable potassium transport system protein Kup from Anaeromyxobacter dehalogenans (strain 2CP-1 / ATCC BAA-258).